The sequence spans 469 residues: Cytosolic beta-glucosidase (469 aa).

Q17, H120, and N164 together coordinate substrate. The active-site Proton donor is the E165. Residue Y309 participates in substrate binding. Catalysis depends on E373, which acts as the Nucleophile. Substrate-binding positions include W417 and 424–425 (EW).

This sequence belongs to the glycosyl hydrolase 1 family. Klotho subfamily. In terms of processing, the N-terminus is blocked. In terms of tissue distribution, present in hepatocytes (at protein level).

It localises to the cytoplasm. The protein resides in the cytosol. The enzyme catalyses Hydrolysis of terminal, non-reducing beta-D-glucosyl residues with release of beta-D-glucose.. It catalyses the reaction a beta-D-glucosyl-(1&lt;-&gt;1')-N-acylsphing-4-enine + H2O = an N-acylsphing-4-enine + D-glucose. The catalysed reaction is a beta-D-galactosyl-(1&lt;-&gt;1')-N-acylsphing-4-enine + H2O = an N-acylsphing-4-enine + D-galactose. It carries out the reaction beta-D-glucosyl-(1&lt;-&gt;1)-sphing-4-enine + H2O = sphing-4-enine + D-glucose. The enzyme catalyses beta-D-glucosyl-(1&lt;-&gt;1)-N-octadecanoylsphing-4-enine + H2O = N-octadecanoylsphing-4-enine + D-glucose. It catalyses the reaction beta-D-galactosyl-(1&lt;-&gt;1)-sphing-4-enine + H2O = sphing-4-enine + D-galactose. The catalysed reaction is beta-D-galactosyl-(1&lt;-&gt;1')-N-octadecanoylsphing-4-enine + H2O = N-octadecanoylsphing-4-enine + D-galactose. It carries out the reaction a beta-D-xylosyl-(1&lt;-&gt;1')-N-acylsphing-4-enine + cholesterol = cholesteryl 3-beta-D-xyloside + an N-acylsphing-4-enine. Inhibited by 2,4-dinitrophenyl-2-fluoro-2-deoxy-beta-D-glucopyranoside. Functionally, neutral cytosolic beta-glycosidase with a broad substrate specificity that could play a role in the catabolism of glycosylceramides. Has a significant glucosylceramidase activity in vitro. However, that activity is relatively low and its significance in vivo is not clear. Hydrolyzes galactosylceramide/GalCer, glucosylsphingosine/GlcSph and galactosylsphingosine/GalSph. However, the in vivo relevance of these activities is unclear. It can also hydrolyze a broad variety of dietary glycosides including phytoestrogens, flavonols, flavones, flavanones and cyanogens in vitro and could therefore play a role in the metabolism of xenobiotics. Possesses transxylosylase activity in vitro using xylosylated ceramides/XylCers (such as beta-D-xylosyl-(1&lt;-&gt;1')-N-acylsphing-4-enine) as xylosyl donors and cholesterol as acceptor. Could also play a role in the catabolism of cytosolic sialyl free N-glycans. The protein is Cytosolic beta-glucosidase of Cavia porcellus (Guinea pig).